A 346-amino-acid chain; its full sequence is Dihydroorotase (346 aa).

2 residues coordinate Zn(2+): His-13 and His-15. Substrate contacts are provided by residues His-15–Arg-17 and Asn-41. Zn(2+) contacts are provided by Lys-99, His-136, and His-174. N6-carboxylysine is present on Lys-99. His-136 lines the substrate pocket. Leu-219 lines the substrate pocket. Position 247 (Asp-247) interacts with Zn(2+). Asp-247 is an active-site residue. Residues His-251 and Ala-263 each coordinate substrate.

It belongs to the metallo-dependent hydrolases superfamily. DHOase family. Class II DHOase subfamily. In terms of assembly, homodimer. The cofactor is Zn(2+).

The enzyme catalyses (S)-dihydroorotate + H2O = N-carbamoyl-L-aspartate + H(+). The protein operates within pyrimidine metabolism; UMP biosynthesis via de novo pathway; (S)-dihydroorotate from bicarbonate: step 3/3. Catalyzes the reversible cyclization of carbamoyl aspartate to dihydroorotate. The sequence is that of Dihydroorotase from Rhizobium leguminosarum bv. trifolii (strain WSM2304).